Here is a 228-residue protein sequence, read N- to C-terminus: 2-C-methyl-D-erythritol 4-phosphate cytidylyltransferase (228 aa).

This sequence belongs to the IspD/TarI cytidylyltransferase family. IspD subfamily.

The enzyme catalyses 2-C-methyl-D-erythritol 4-phosphate + CTP + H(+) = 4-CDP-2-C-methyl-D-erythritol + diphosphate. It participates in isoprenoid biosynthesis; isopentenyl diphosphate biosynthesis via DXP pathway; isopentenyl diphosphate from 1-deoxy-D-xylulose 5-phosphate: step 2/6. Its function is as follows. Catalyzes the formation of 4-diphosphocytidyl-2-C-methyl-D-erythritol from CTP and 2-C-methyl-D-erythritol 4-phosphate (MEP). The sequence is that of 2-C-methyl-D-erythritol 4-phosphate cytidylyltransferase from Actinobacillus pleuropneumoniae serotype 3 (strain JL03).